The primary structure comprises 104 residues: Large ribosomal subunit protein bL21 (104 aa).

It belongs to the bacterial ribosomal protein bL21 family. In terms of assembly, part of the 50S ribosomal subunit. Contacts protein L20.

Functionally, this protein binds to 23S rRNA in the presence of protein L20. In Clostridium botulinum (strain Kyoto / Type A2), this protein is Large ribosomal subunit protein bL21.